The following is a 295-amino-acid chain: Mediator of RNA polymerase II transcription subunit 27 (295 aa).

This sequence belongs to the Mediator complex subunit 27 family. In terms of assembly, component of the Mediator complex.

The protein resides in the nucleus. Component of the Mediator complex, a coactivator involved in the regulated transcription of nearly all RNA polymerase II-dependent genes. Mediator functions as a bridge to convey information from gene-specific regulatory proteins to the basal RNA polymerase II transcription machinery. Mediator is recruited to promoters by direct interactions with regulatory proteins and serves as a scaffold for the assembly of a functional preinitiation complex with RNA polymerase II and the general transcription factors. The chain is Mediator of RNA polymerase II transcription subunit 27 (MED27) from Anopheles gambiae (African malaria mosquito).